Consider the following 106-residue polypeptide: Thiosulfate sulfurtransferase GlpE (106 aa).

A Rhodanese domain is found at 17–105; that stretch reads EQGEAKLVDI…WQRAQLPIVR (89 aa). The Cysteine persulfide intermediate role is filled by C65.

The protein belongs to the GlpE family.

The protein localises to the cytoplasm. It carries out the reaction thiosulfate + hydrogen cyanide = thiocyanate + sulfite + 2 H(+). The enzyme catalyses thiosulfate + [thioredoxin]-dithiol = [thioredoxin]-disulfide + hydrogen sulfide + sulfite + 2 H(+). Functionally, transferase that catalyzes the transfer of sulfur from thiosulfate to thiophilic acceptors such as cyanide or dithiols. May function in a CysM-independent thiosulfate assimilation pathway by catalyzing the conversion of thiosulfate to sulfite, which can then be used for L-cysteine biosynthesis. The polypeptide is Thiosulfate sulfurtransferase GlpE (Vibrio parahaemolyticus serotype O3:K6 (strain RIMD 2210633)).